A 334-amino-acid polypeptide reads, in one-letter code: uncharacterized protein (334 aa).

5 WD repeats span residues 56-86 (LKGE…KLWT), 98-128 (KPVA…RIWD), 139-169 (GHTS…EGWS), 220-250 (TDQG…RVFN), and 262-291 (LDDG…RVWN).

This is an uncharacterized protein from Synechocystis sp. (strain ATCC 27184 / PCC 6803 / Kazusa).